The primary structure comprises 115 residues: U17-barytoxin-Tl1b (115 aa).

Residues 1–20 form the signal peptide; it reads MKTIIVFLSLLVLATKFGDA. The propeptide occupies 21-74; the sequence is KEGVNQKQKKEVTQNEFREEYLNEMAAMSLVQQLEAIERALFENEAGRNSRQKR. 3 disulfides stabilise this stretch: cysteine 75-cysteine 89, cysteine 82-cysteine 94, and cysteine 88-cysteine 109.

It belongs to the neurotoxin 14 (magi-1) family. 03 (ICK-30-40) subfamily. Expressed by the venom gland.

The protein localises to the secreted. In terms of biological role, ion channel inhibitor. This chain is U17-barytoxin-Tl1b, found in Trittame loki (Brush-footed trapdoor spider).